Consider the following 310-residue polypeptide: MEFKHKDIIALRDLSKEEIELLISTAENMREVNSRDIKKVPTLRGKTIINLFYESSTRTRTSFEIAGKRLSADTVNIAPSNSSATKGETLADTALNLLAMKPDIIVMRHAVSGSHYFLSKKVGCSIINAGDGAHEHPSQGLLDMLTIKDKFGRLDGLKVAMVGDITHSRVARSNIQGLTKMGSSIFLAGPPTMMPPGVEQLGNVTVCGTMKEAIQDADVVIMLRIQQERQGKTLMPNTREYSRYFGLNPENVKWAKPDAMVMHPGPINRGVEMSSYVVDGNQSHILKQVENGVAVRMAMLYHVCGGGNVE.

Carbamoyl phosphate-binding residues include Arg-58 and Thr-59. Lys-86 is a binding site for L-aspartate. 3 residues coordinate carbamoyl phosphate: Arg-108, His-136, and Gln-139. L-aspartate is bound by residues Arg-169 and Arg-224. Positions 265 and 266 each coordinate carbamoyl phosphate.

It belongs to the aspartate/ornithine carbamoyltransferase superfamily. ATCase family. In terms of assembly, heterododecamer (2C3:3R2) of six catalytic PyrB chains organized as two trimers (C3), and six regulatory PyrI chains organized as three dimers (R2).

The catalysed reaction is carbamoyl phosphate + L-aspartate = N-carbamoyl-L-aspartate + phosphate + H(+). It functions in the pathway pyrimidine metabolism; UMP biosynthesis via de novo pathway; (S)-dihydroorotate from bicarbonate: step 2/3. Its function is as follows. Catalyzes the condensation of carbamoyl phosphate and aspartate to form carbamoyl aspartate and inorganic phosphate, the committed step in the de novo pyrimidine nucleotide biosynthesis pathway. The polypeptide is Aspartate carbamoyltransferase catalytic subunit (Trichlorobacter lovleyi (strain ATCC BAA-1151 / DSM 17278 / SZ) (Geobacter lovleyi)).